An 868-amino-acid chain; its full sequence is MSFFFIRKIFGSTNKKIIKSFRKIVQQINALETEMQSLSDEELAGKTEEFKQELKNGKTLNDLLVPAFAVVREASRRFLNMRHFDVQLIGGMVLHNGMISEMKTGEGKTLVATLAAYLNSLEGKGVHVVTVNDYLAKRDTEWMSKLYNSLGVSVAFITNNLTDEERKEAYSADIVYSTNNELAFDYLRDNMKFSQEDMVQRGFHYGIVDEVDSILIDEARTPLIISGPVEENNQIYKHINKIVTKLVDSDYEVDEKGRTVFLTEDGISRVEELLRSYNLIPENSSLYDTDSMIMTHYIDQALRAYKLFTADKDYIVKDGKVVIIDEFTGRMMEGRRYSDGLHQALEAKENLEIQHENQTLASVTFQNYFRMYNKLSGMTGTAATEAEEFRDIYRLNVVKIPTNVPVKRVDIDDEIYGTEKEKFNAVLKFIEECYKRLQPVLVGTVSIENSEKLSALLQSHSLKHSVLNARYHEQEAYIIAQAGVPGSITIATNMAGRGTDIQLGGNAEMIAKVELKKIKNADEREKKYQEIVERVKKDKEIAIKAGGLCVVGTERHESRRIDDQLRGRSGRQGDPGLSKFFLSLEDDLMRIFGSDRMRSFLQKVGLKNNEAIHHPWINKALEKAQKKVEARNYDVRKSLLKFDDVINNQRKVIFKQRNNILGNEINDLLEVYSEVNESVVEGIIQSGYYEDYIENIVKEFHTRYGITLDKEDLAKFLNKQEALNYINDKIQEFFTEKEKYFNSQHTTDLWNTIVKQMMIMTLDHLWREHLSVLESLRQSISLRAMGQKDPLNEFKREAFLMFESMLEKWKELTIHRLAHFKLADNQEIGNRLHSARNSRLPKVSRNDKCPCNSGKKYKHCHGAVTVVS.

ATP contacts are provided by residues Q87, 105 to 109, and D500; that span reads GEGKT. The Zn(2+) site is built by C849, C851, C860, and H861.

This sequence belongs to the SecA family. In terms of assembly, monomer and homodimer. Part of the essential Sec protein translocation apparatus which comprises SecA, SecYEG and auxiliary proteins SecDF-YajC and YidC. Zn(2+) is required as a cofactor.

It is found in the cell membrane. Its subcellular location is the cytoplasm. The catalysed reaction is ATP + H2O + cellular proteinSide 1 = ADP + phosphate + cellular proteinSide 2.. Its function is as follows. Part of the Sec protein translocase complex. Interacts with the SecYEG preprotein conducting channel. Has a central role in coupling the hydrolysis of ATP to the transfer of proteins into and across the cell membrane, serving both as a receptor for the preprotein-SecB complex and as an ATP-driven molecular motor driving the stepwise translocation of polypeptide chains across the membrane. The polypeptide is Protein translocase subunit SecA (Wolbachia pipientis wMel).